The primary structure comprises 607 residues: Polypeptide N-acetylgalactosaminyltransferase 18 (607 aa).

The Cytoplasmic portion of the chain corresponds to 1–12 (MVCTRKTKTLVS). The chain crosses the membrane as a helical; Signal-anchor for type II membrane protein span at residues 13 to 35 (TCVILSGMTNIICLLYVGWVTNY). Over 36-607 (IASVYVRGQE…ITNVLRSLAS (572 aa)) the chain is Lumenal. 5 cysteine pairs are disulfide-bonded: Cys-144–Cys-377, Cys-368–Cys-447, Cys-482–Cys-498, Cys-530–Cys-543, and Cys-571–Cys-591. Asn-146 carries an N-linked (GlcNAc...) asparagine glycan. Positions 153–267 (LPEVSIVFIF…VGWAEPVLTR (115 aa)) are catalytic subdomain A. Asp-194 contributes to the substrate binding site. Asn-195 carries an N-linked (GlcNAc...) asparagine glycan. Positions 251 and 253 each coordinate Mn(2+). N-linked (GlcNAc...) asparagine glycosylation is present at Asn-320. A catalytic subdomain B region spans residues 324–385 (PIRSPALIGC…PCSRIAHIER (62 aa)). His-382 lines the Mn(2+) pocket. Residues Arg-385 and Tyr-390 each coordinate substrate. The Ricin B-type lectin domain maps to 469–599 (AYGVLQNSLK…KCSGQHWSIT (131 aa)).

Belongs to the glycosyltransferase 2 family. GalNAc-T subfamily. It depends on Mn(2+) as a cofactor.

It is found in the golgi apparatus membrane. It catalyses the reaction L-seryl-[protein] + UDP-N-acetyl-alpha-D-galactosamine = a 3-O-[N-acetyl-alpha-D-galactosaminyl]-L-seryl-[protein] + UDP + H(+). The enzyme catalyses L-threonyl-[protein] + UDP-N-acetyl-alpha-D-galactosamine = a 3-O-[N-acetyl-alpha-D-galactosaminyl]-L-threonyl-[protein] + UDP + H(+). It functions in the pathway protein modification; protein glycosylation. In terms of biological role, catalyzes the initial reaction in O-linked oligosaccharide biosynthesis, the transfer of an N-acetyl-D-galactosamine (GalNAc) residue from UDP-GalNAc to a serine or threonine residue on the protein receptor. The chain is Polypeptide N-acetylgalactosaminyltransferase 18 (GALNT18) from Homo sapiens (Human).